A 352-amino-acid polypeptide reads, in one-letter code: tRNA-specific 2-thiouridylase MnmA (352 aa).

Residues 7–14 and Leu-33 each bind ATP; that span reads GLSGGVDS. Cys-94 functions as the Nucleophile in the catalytic mechanism. The cysteines at positions 94 and 193 are disulfide-linked. Gly-119 contacts ATP. An interaction with tRNA region spans residues 143-145; sequence KDQ. The active-site Cysteine persulfide intermediate is the Cys-193. Residues 298 to 299 are interaction with tRNA; it reads RY.

Belongs to the MnmA/TRMU family.

Its subcellular location is the cytoplasm. The catalysed reaction is S-sulfanyl-L-cysteinyl-[protein] + uridine(34) in tRNA + AH2 + ATP = 2-thiouridine(34) in tRNA + L-cysteinyl-[protein] + A + AMP + diphosphate + H(+). Catalyzes the 2-thiolation of uridine at the wobble position (U34) of tRNA, leading to the formation of s(2)U34. In Trichormus variabilis (strain ATCC 29413 / PCC 7937) (Anabaena variabilis), this protein is tRNA-specific 2-thiouridylase MnmA.